Here is a 1121-residue protein sequence, read N- to C-terminus: Myelin transcription factor 1 (1121 aa).

Disordered stretches follow at residues 1–156 (MSLE…SKGS) and 200–376 (EAAE…MTRG). A CCHHC-type 1 zinc finger spans residues 21–64 (PETTAADLSCPTPGCTGSGHVRGKYSRHRSLQSCPLAKKRKLEG). Residues C30, C35, H48, and C54 each coordinate Zn(2+). Over residues 41–50 (VRGKYSRHRS) the composition is skewed to basic residues. 2 stretches are compositionally biased toward basic and acidic residues: residues 62–71 (LEGAEAEHLV) and 123–132 (DEIHRPETAE). The segment covering 147–156 (GSATASSKGS) has biased composition (low complexity). Residues 258–308 (EEEDEEEEEEEEEEEEDEEEEEEEEEEEEEEEEEEEEEEEEEEEEEEEEAA) show a composition bias toward acidic residues. The segment covering 346–358 (VRSDDDKDEDTHS) has biased composition (basic and acidic residues). 2 CCHHC-type zinc fingers span residues 433–476 (SRAE…PPEI) and 477–520 (LAMH…KLAK). Zn(2+) contacts are provided by C442, C447, H460, C466, C486, C491, H504, and C510. 2 disordered regions span residues 517 to 540 (KLAK…SNSD) and 668 to 774 (TLDL…EERK). Over residues 526–540 (QPQTGDPSKSSSNSD) the composition is skewed to polar residues. A compositionally biased stretch (low complexity) spans 705–723 (SSTSAPSSSMTSPQSSQAS). Basic and acidic residues predominate over residues 724–733 (RQDEWDRPLD). The span at 759 to 770 (EADDQEVSEENF) shows a compositional bias: acidic residues. CCHHC-type zinc fingers lie at residues 791 to 834 (KDIK…LRNL), 835 to 878 (MAAH…GVKV), 884 to 927 (DKED…QKEG), and 937 to 980 (KSLK…GKKG). The Zn(2+) site is built by C800, C805, H818, C824, C844, C849, H862, C868, C893, C898, H911, C917, C946, C951, H964, and C970.

This sequence belongs to the MYT1 family. Interacts with STEAP3. Mostly in developing nervous system. Expressed in neural progenitors and oligodendrocyte lineage cells. More highly expressed in oligodendrocyte progenitors than in differentiated oligodendrocytes.

It localises to the nucleus. Its function is as follows. Binds to the promoter region of genes encoding proteolipid proteins of the central nervous system. May play a role in the development of neurons and oligodendroglia in the CNS. May regulate a critical transition point in oligodendrocyte lineage development by modulating oligodendrocyte progenitor proliferation relative to terminal differentiation and up-regulation of myelin gene transcription. The chain is Myelin transcription factor 1 (MYT1) from Homo sapiens (Human).